Reading from the N-terminus, the 215-residue chain is Probable transaldolase (215 aa).

K83 acts as the Schiff-base intermediate with substrate in catalysis.

It belongs to the transaldolase family. Type 3B subfamily.

Its subcellular location is the cytoplasm. The enzyme catalyses D-sedoheptulose 7-phosphate + D-glyceraldehyde 3-phosphate = D-erythrose 4-phosphate + beta-D-fructose 6-phosphate. Its pathway is carbohydrate degradation; pentose phosphate pathway; D-glyceraldehyde 3-phosphate and beta-D-fructose 6-phosphate from D-ribose 5-phosphate and D-xylulose 5-phosphate (non-oxidative stage): step 2/3. Its function is as follows. Transaldolase is important for the balance of metabolites in the pentose-phosphate pathway. This chain is Probable transaldolase, found in Heliobacterium modesticaldum (strain ATCC 51547 / Ice1).